We begin with the raw amino-acid sequence, 391 residues long: Phosphoglycerate kinase (391 aa).

Residues 21–23 (DLN), Arg36, 59–62 (HLGR), Arg113, and Arg146 each bind substrate. ATP is bound by residues Lys197, Glu319, and 345–348 (GGDT).

The protein belongs to the phosphoglycerate kinase family. In terms of assembly, monomer.

The protein localises to the cytoplasm. It catalyses the reaction (2R)-3-phosphoglycerate + ATP = (2R)-3-phospho-glyceroyl phosphate + ADP. It participates in carbohydrate degradation; glycolysis; pyruvate from D-glyceraldehyde 3-phosphate: step 2/5. The chain is Phosphoglycerate kinase from Shewanella putrefaciens (strain CN-32 / ATCC BAA-453).